Here is a 355-residue protein sequence, read N- to C-terminus: Diacylglycerol O-acyltransferase 2A (355 aa).

A run of 2 helical transmembrane segments spans residues 41–61 (LLWC…CSIP) and 62–78 (VLLW…ILVW). Asn-142 carries N-linked (GlcNAc...) asparagine glycosylation.

It belongs to the diacylglycerol acyltransferase family.

The protein resides in the endoplasmic reticulum membrane. The enzyme catalyses an acyl-CoA + a 1,2-diacyl-sn-glycerol = a triacyl-sn-glycerol + CoA. Its pathway is glycerolipid metabolism; triacylglycerol biosynthesis. In terms of biological role, catalyzes the terminal and only committed step in triacylglycerol synthesis by using diacylglycerol and fatty acyl CoA as substrates. Required for storage lipid synthesis. This is Diacylglycerol O-acyltransferase 2A (DGAT2A) from Umbelopsis ramanniana (Oleaginous fungus).